Here is a 389-residue protein sequence, read N- to C-terminus: uncharacterized protein (389 aa).

The signal sequence occupies residues 1 to 23 (MHFAKLGAIGLLGSIICAYAASA).

Belongs to the IUNH family.

The protein resides in the endoplasmic reticulum lumen. This is an uncharacterized protein from Schizosaccharomyces pombe (strain 972 / ATCC 24843) (Fission yeast).